Reading from the N-terminus, the 273-residue chain is NH(3)-dependent NAD(+) synthetase (273 aa).

Residue 47–54 (GISGGQDS) participates in ATP binding. Aspartate 53 provides a ligand contact to Mg(2+). Residue arginine 139 coordinates deamido-NAD(+). An ATP-binding site is contributed by threonine 159. Glutamate 164 serves as a coordination point for Mg(2+). 2 residues coordinate deamido-NAD(+): lysine 172 and aspartate 179. ATP-binding residues include lysine 188 and threonine 210. 259-260 (HK) provides a ligand contact to deamido-NAD(+).

Belongs to the NAD synthetase family. As to quaternary structure, homodimer.

The enzyme catalyses deamido-NAD(+) + NH4(+) + ATP = AMP + diphosphate + NAD(+) + H(+). Its pathway is cofactor biosynthesis; NAD(+) biosynthesis; NAD(+) from deamido-NAD(+) (ammonia route): step 1/1. Functionally, catalyzes the ATP-dependent amidation of deamido-NAD to form NAD. Uses ammonia as a nitrogen source. The polypeptide is NH(3)-dependent NAD(+) synthetase (Staphylococcus aureus (strain MRSA252)).